A 680-amino-acid chain; its full sequence is Probable potassium transport system protein Kup (680 aa).

Helical transmembrane passes span 16–36 (IAGM…SPLY), 60–80 (ISLV…LIAL), 103–123 (WLVI…MLTP), 150–170 (EVII…KFGT), 177–197 (FGPI…MNLM), 222–242 (VGIL…ALYS), 255–275 (SWPY…VWLL), 302–322 (IPAI…LISG), 351–371 (LYIS…VFYF), 380–400 (AYGL…FHYL), 407–427 (WFLA…FFIA), and 432–452 (FMHG…IMFV).

Belongs to the HAK/KUP transporter (TC 2.A.72) family.

The protein resides in the cell membrane. The catalysed reaction is K(+)(in) + H(+)(in) = K(+)(out) + H(+)(out). Its function is as follows. Transport of potassium into the cell. Likely operates as a K(+):H(+) symporter. This chain is Probable potassium transport system protein Kup, found in Latilactobacillus sakei subsp. sakei (strain 23K) (Lactobacillus sakei subsp. sakei).